Consider the following 183-residue polypeptide: Lipid droplet coating protein Cap20 (183 aa).

The protein belongs to the perilipin family.

It localises to the lipid droplet. Functionally, lipid droplet coating protein that regulates lipid metabolism, appressorial turgor pressure, and virulence. Appressorial turgor pressure is important for the mechanical penetration of the host cuticle during infection. This is Lipid droplet coating protein Cap20 (Cap20) from Colletotrichum gloeosporioides (Anthracnose fungus).